We begin with the raw amino-acid sequence, 40 residues long: Photosystem II reaction center protein J (40 aa).

A helical membrane pass occupies residues 8-28 (IPLWLVALVAGTGVLVVVGLF).

The protein belongs to the PsbJ family. PSII is composed of 1 copy each of membrane proteins PsbA, PsbB, PsbC, PsbD, PsbE, PsbF, PsbH, PsbI, PsbJ, PsbK, PsbL, PsbM, PsbT, PsbX, PsbY, PsbZ, Psb30/Ycf12, peripheral proteins PsbO, CyanoQ (PsbQ), PsbU, PsbV and a large number of cofactors. It forms dimeric complexes.

It is found in the cellular thylakoid membrane. In terms of biological role, one of the components of the core complex of photosystem II (PSII). PSII is a light-driven water:plastoquinone oxidoreductase that uses light energy to abstract electrons from H(2)O, generating O(2) and a proton gradient subsequently used for ATP formation. It consists of a core antenna complex that captures photons, and an electron transfer chain that converts photonic excitation into a charge separation. The chain is Photosystem II reaction center protein J from Trichodesmium erythraeum (strain IMS101).